We begin with the raw amino-acid sequence, 228 residues long: Putative adhesin RBE_1271 (228 aa).

The N-terminal stretch at 1–22 (MKKLLLIAATSATVLSSALSFA) is a signal peptide.

The polypeptide is Putative adhesin RBE_1271 (Rickettsia bellii (strain RML369-C)).